We begin with the raw amino-acid sequence, 248 residues long: 2,3-bisphosphoglycerate-dependent phosphoglycerate mutase (248 aa).

Residues 7-14, 20-21, arginine 59, 86-89, lysine 97, 113-114, and 182-183 contribute to the substrate site; these read RHGESIWN, TG, ERHY, RR, and GN. Histidine 8 acts as the Tele-phosphohistidine intermediate in catalysis. The Proton donor/acceptor role is filled by glutamate 86.

The protein belongs to the phosphoglycerate mutase family. BPG-dependent PGAM subfamily.

The enzyme catalyses (2R)-2-phosphoglycerate = (2R)-3-phosphoglycerate. It participates in carbohydrate degradation; glycolysis; pyruvate from D-glyceraldehyde 3-phosphate: step 3/5. Functionally, catalyzes the interconversion of 2-phosphoglycerate and 3-phosphoglycerate. This chain is 2,3-bisphosphoglycerate-dependent phosphoglycerate mutase, found in Methylacidiphilum infernorum (isolate V4) (Methylokorus infernorum (strain V4)).